The following is a 388-amino-acid chain: D-alanyl-D-alanine carboxypeptidase DacD (388 aa).

The first 21 residues, 1-21 (MKRRLIIAASLFVFNLSSGFA), serve as a signal peptide directing secretion. Ser63 functions as the Acyl-ester intermediate in the catalytic mechanism. The active-site Proton acceptor is the Lys66. The active site involves Ser129. Lys232 contacts substrate.

It belongs to the peptidase S11 family.

It is found in the cell inner membrane. The enzyme catalyses Preferential cleavage: (Ac)2-L-Lys-D-Ala-|-D-Ala. Also transpeptidation of peptidyl-alanyl moieties that are N-acyl substituents of D-alanine.. Its pathway is cell wall biogenesis; peptidoglycan biosynthesis. Removes C-terminal D-alanyl residues from sugar-peptide cell wall precursors. The sequence is that of D-alanyl-D-alanine carboxypeptidase DacD (dacD) from Escherichia coli (strain K12).